The sequence spans 233 residues: 5-demethoxyubiquinone hydroxylase, mitochondrial (233 aa).

The transit peptide at 1–15 directs the protein to the mitochondrion; that stretch reads MLSRVSVFKPASRGF. Phosphoserine is present on residues serine 20 and serine 28. A Phosphothreonine modification is found at threonine 32. Residues glutamate 63, glutamate 95, histidine 98, glutamate 147, glutamate 194, and histidine 197 each contribute to the Fe cation site.

The protein belongs to the COQ7 family. Component of a multi-subunit COQ enzyme complex, composed of at least COQ3, COQ4, COQ5, COQ6, COQ7 and COQ9. It depends on Fe cation as a cofactor. Phosphorylated. Dephosphorylated by PTC7; dephosphorylation is essential for enzyme activation.

It localises to the mitochondrion inner membrane. The enzyme catalyses a 5-methoxy-2-methyl-3-(all-trans-polyprenyl)benzene-1,4-diol + AH2 + O2 = a 3-demethylubiquinol + A + H2O. The catalysed reaction is a 5-methoxy-2-methyl-3-(all-trans-polyprenyl)benzoquinone + NADH + O2 = a 3-demethylubiquinone + NAD(+) + H2O. It participates in cofactor biosynthesis; ubiquinone biosynthesis. Its activity is regulated as follows. Dephosphorylation by PTC7 leads to activation. In terms of biological role, catalyzes the hydroxylation of 2-hexaprenyl-3-methyl-6-methoxy-1,4-benzoquinol (DMQH2) during ubiquinone biosynthesis. Also catalyzes the hydroxylation of the 5-methoxy-2-methyl-3-(all-trans-polyprenyl)benzoquinone at the C6 position and participates in the biosynthesis of ubiquinone. Also has a structural role in the COQ enzyme complex, stabilizing COQ3 and COQ4 polypeptides. This Saccharomyces cerevisiae (strain ATCC 204508 / S288c) (Baker's yeast) protein is 5-demethoxyubiquinone hydroxylase, mitochondrial.